The chain runs to 123 residues: Kininogen (123 aa).

Post-translationally, bradykinin is released from kininogen by kallikrein. In terms of processing, N-glycosylated. Contains sulfated N-acetylglucosamine and O-acetylated sialic acids as terminal elements on biantennary and triantennary N-glycans.

Functionally, inhibits papain and ficin (cysteine proteinases) but not trypsin (a serine proteinase). This chain is Kininogen, found in Gadus morhua (Atlantic cod).